Reading from the N-terminus, the 70-residue chain is Conotoxin Lt3.4 (70 aa).

An N-terminal signal peptide occupies residues methionine 1–alanine 24. A propeptide spanning residues aspartate 25–arginine 54 is cleaved from the precursor. Glutamine 55 bears the Pyrrolidone carboxylic acid mark. 3 disulfides stabilise this stretch: cysteine 56-cysteine 68, cysteine 57-cysteine 66, and cysteine 62-cysteine 69.

It belongs to the conotoxin M superfamily. As to expression, expressed by the venom duct.

It is found in the secreted. The polypeptide is Conotoxin Lt3.4 (Conus litteratus (Lettered cone)).